Consider the following 320-residue polypeptide: Cytochrome f (320 aa).

The signal sequence occupies residues 1–35; that stretch reads MQTRNTFSWIREEITRSISVSLMIYIITWASISSA. Heme contacts are provided by tyrosine 36, cysteine 56, cysteine 59, and histidine 60. Residues 286-306 traverse the membrane as a helical segment; the sequence is VQGLLFFLGSVVLAQIFLVLK.

The protein belongs to the cytochrome f family. The 4 large subunits of the cytochrome b6-f complex are cytochrome b6, subunit IV (17 kDa polypeptide, petD), cytochrome f and the Rieske protein, while the 4 small subunits are PetG, PetL, PetM and PetN. The complex functions as a dimer. It depends on heme as a cofactor.

The protein localises to the plastid. Its subcellular location is the chloroplast thylakoid membrane. Its function is as follows. Component of the cytochrome b6-f complex, which mediates electron transfer between photosystem II (PSII) and photosystem I (PSI), cyclic electron flow around PSI, and state transitions. This Nasturtium officinale (Watercress) protein is Cytochrome f.